A 253-amino-acid polypeptide reads, in one-letter code: Putative cysteine-rich repeat secretory protein 33 (253 aa).

Positions 1–28 (MFSSYSLCKCLVSFHILAIQVLISCASS) are cleaved as a signal peptide. Gnk2-homologous domains are found at residues 34 to 133 (EYLN…MIND) and 141 to 250 (YDNI…LYPF).

It belongs to the cysteine-rich repeat secretory protein family.

The protein localises to the secreted. This Arabidopsis thaliana (Mouse-ear cress) protein is Putative cysteine-rich repeat secretory protein 33 (CRRSP33).